The sequence spans 112 residues: Large ribosomal subunit protein P1w (112 aa).

Positions 85-112 (AAAPAAEEKKKDEPAEESDGDLGFGLFD) are disordered. Ser102 carries the phosphoserine modification.

Belongs to the eukaryotic ribosomal protein P1/P2 family. As to quaternary structure, P1 and P2 exist as dimers at the large ribosomal subunit.

In terms of biological role, plays an important role in the elongation step of protein synthesis. The protein is Large ribosomal subunit protein P1w (RPP1A) of Arabidopsis thaliana (Mouse-ear cress).